The sequence spans 630 residues: 1-deoxy-D-xylulose-5-phosphate synthase (630 aa).

Residues histidine 73 and 114–116 each bind thiamine diphosphate; that span reads SHA. A Mg(2+)-binding site is contributed by aspartate 146. Thiamine diphosphate is bound by residues 147-148, asparagine 176, phenylalanine 287, and glutamate 371; that span reads GA. Asparagine 176 is a Mg(2+) binding site.

Belongs to the transketolase family. DXPS subfamily. Homodimer. Mg(2+) serves as cofactor. Requires thiamine diphosphate as cofactor.

The enzyme catalyses D-glyceraldehyde 3-phosphate + pyruvate + H(+) = 1-deoxy-D-xylulose 5-phosphate + CO2. Its pathway is metabolic intermediate biosynthesis; 1-deoxy-D-xylulose 5-phosphate biosynthesis; 1-deoxy-D-xylulose 5-phosphate from D-glyceraldehyde 3-phosphate and pyruvate: step 1/1. Its function is as follows. Catalyzes the acyloin condensation reaction between C atoms 2 and 3 of pyruvate and glyceraldehyde 3-phosphate to yield 1-deoxy-D-xylulose-5-phosphate (DXP). This Corynebacterium jeikeium (strain K411) protein is 1-deoxy-D-xylulose-5-phosphate synthase.